A 267-amino-acid polypeptide reads, in one-letter code: Integral membrane protein 2C (267 aa).

Threonine 37 bears the Phosphothreonine mark. A helical; Signal-anchor for type II membrane protein transmembrane segment spans residues 55–75 (VGGVCYLSMGMVVLLMGLVFA). The BRICHOS domain maps to 136 to 230 (FGGGDPADII…LCNGKDTYRL (95 aa)). Cysteine 163 and cysteine 222 are oxidised to a cystine. Asparagine 169 is a glycosylation site (N-linked (GlcNAc...) asparagine).

Belongs to the ITM2 family. As to quaternary structure, interacts with BACE1. Interacts with APP. Interacts with STMN2. Type I membrane-bound, as well as soluble, furin has a pre-eminent role in ITM2C proteolytic processing. PCSK7 and PCSK5 may also be involved although to a lesser extent. The soluble form of PCSK7 is incapable of processing ITM2C. Fails to undergo shedding by ADAM10 and intramembrane cleavage by SPPL2B. As to expression, high levels in the brain, specifically in the cerebral cortex, medulla, amygdala, hippocampus, thalamus, caudate nucleus, cerebellum, olfactory lobe and spinal cord. Very low levels in other organs.

It is found in the lysosome membrane. The protein localises to the cell membrane. In terms of biological role, negative regulator of amyloid-beta peptide production. May inhibit the processing of APP by blocking its access to alpha- and beta-secretase. Binding to the beta-secretase-cleaved APP C-terminal fragment is negligible, suggesting that ITM2C is a poor gamma-secretase cleavage inhibitor. May play a role in TNF-induced cell death and neuronal differentiation. This is Integral membrane protein 2C (ITM2C) from Homo sapiens (Human).